The following is a 1035-amino-acid chain: Glycine dehydrogenase (decarboxylating), mitochondrial (1035 aa).

A mitochondrion-targeting transit peptide spans 1–64; it reads MERARKLANR…KSFNTQQARS (64 aa). The residue at position 771 (K771) is an N6-(pyridoxal phosphate)lysine.

It belongs to the GcvP family. In terms of assembly, homodimer. The glycine cleavage system is composed of four proteins: P, T, L and H. Requires pyridoxal 5'-phosphate as cofactor.

The protein resides in the mitochondrion. It carries out the reaction N(6)-[(R)-lipoyl]-L-lysyl-[glycine-cleavage complex H protein] + glycine + H(+) = N(6)-[(R)-S(8)-aminomethyldihydrolipoyl]-L-lysyl-[glycine-cleavage complex H protein] + CO2. Its function is as follows. The glycine cleavage system catalyzes the degradation of glycine. The P protein binds the alpha-amino group of glycine through its pyridoxal phosphate cofactor; CO(2) is released and the remaining methylamine moiety is then transferred to the lipoamide cofactor of the H protein. In Solanum tuberosum (Potato), this protein is Glycine dehydrogenase (decarboxylating), mitochondrial (GDCSP).